Consider the following 568-residue polypeptide: N66 matrix protein (568 aa).

The N-terminal stretch at 1–22 is a signal peptide; it reads MWRMTTLLHLTALLVLIPLCHC. In terms of domain architecture, Alpha-carbonic anhydrase spans 55–567; it reads AGFSYNRDIC…KHPLRVYKNS (513 aa). His154, His156, and His179 together coordinate Zn(2+). The segment at 259–421 is disordered; that stretch reads NGNNGNNGNG…NGYNGDNGNS (163 aa). The segment covering 280–290 has biased composition (gly residues); the sequence is GNNGNGNGNNG. A compositionally biased stretch (low complexity) spans 291–318; sequence YNGNNGYNGNNGNNGNGNNDNNGNDNNG. Composition is skewed to gly residues over residues 319–352 and 362–380; these read NNGG…GNNG and NGNG…GNNG. N-linked (GlcNAc...) asparagine glycosylation occurs at Asn389. Residues 390–413 are compositionally biased toward gly residues; sequence GSNGNNGGNGNNGNNGDNGNGDNG. 506-507 lines the substrate pocket; sequence TT. N-linked (GlcNAc...) asparagine glycosylation is present at Asn511.

This sequence belongs to the alpha-carbonic anhydrase family. As to quaternary structure, homooligomer; disulfide-linked. May also be disulfide-linked to insoluble organic matrix. Zn(2+) serves as cofactor. As to expression, expressed in both the dorsal region of the mantle and the mantle edge. Is dispersed in calcium carbonate and also linked by disulfide bonds to the organic core of nacre.

Its subcellular location is the secreted. It localises to the extracellular space. The protein resides in the extracellular matrix. It carries out the reaction hydrogencarbonate + H(+) = CO2 + H2O. Its function is as follows. Acts as a negative regulator for calcification in the shells of mollusks. May function both as a calcium concentrator and as a carbonic anhydrase required for production of carbonate ions, which are assembled to CaCO(3) at mineralization sites. Is important for shell formation in both the calcitic prismatic layer and the aragonitic nacreous layer. The chain is N66 matrix protein from Pinctada maxima (Silver-lipped pearl oyster).